The sequence spans 356 residues: MRVADFSFELPEALIAHYPQPQRSGCRLLSLDGPTGTLTHGIFTDLLDKLAPGDLLVFNNTRVIPARLFGRKASGGKLEVLVERVLDDHRVLAHVKASKAPKPGAELLLGDDENIRATMLARHDTLFELRFDDERDVFTILNAVGHMPLPPYIDRPDEDADRELYQTVYSQRPGAVAAPTAGLHFDEPMLATLQEKGIEMAFVTLHVGAGTFQPVRVDTIEDHIMHSEYAEVPQEVVDAVLACKARGKRVVAVGTTSVRSLESAAKAAENGLIAPFFGDTRIFIYPGYHYQVVDALVTNFHLPESTLIMLVSAFAGYKNTMNAYQQAVAEQYRFFSYGDAMFISRNPRAPQEKVSP.

The protein belongs to the QueA family. In terms of assembly, monomer.

The protein localises to the cytoplasm. The catalysed reaction is 7-aminomethyl-7-carbaguanosine(34) in tRNA + S-adenosyl-L-methionine = epoxyqueuosine(34) in tRNA + adenine + L-methionine + 2 H(+). Its pathway is tRNA modification; tRNA-queuosine biosynthesis. Functionally, transfers and isomerizes the ribose moiety from AdoMet to the 7-aminomethyl group of 7-deazaguanine (preQ1-tRNA) to give epoxyqueuosine (oQ-tRNA). The sequence is that of S-adenosylmethionine:tRNA ribosyltransferase-isomerase from Yersinia pseudotuberculosis serotype O:3 (strain YPIII).